The chain runs to 511 residues: Voltage-gated potassium channel KCNC1 (511 aa).

Over 1–190 (MGQGDESERI…EDPYSSRYAR (190 aa)) the chain is Cytoplasmic. Ser-44 is subject to Phosphoserine. Zn(2+)-binding residues include His-77, Cys-83, Cys-104, and Cys-105. Positions 121 to 147 (SFGGAPLDNSADDADADGPGDSGDGED) are disordered. A phosphoserine mark is found at Ser-130, Ser-142, Ser-158, and Ser-160. Acidic residues predominate over residues 130-147 (SADDADADGPGDSGDGED). Residues 191-209 (YVAFASLFFILVSITTFCL) form a helical membrane-spanning segment. N-linked (GlcNAc...) asparagine glycans are attached at residues Asn-220 and Asn-229. Residues 248 to 267 (IEGVCVVWFTFEFLMRVVFC) traverse the membrane as a helical segment. Residues 268–276 (PNKVEFIKN) are Cytoplasmic-facing. Residues 277-295 (SLNIIDFVAILPFYLEVGL) traverse the membrane as a helical segment. A helical; Voltage-sensor transmembrane segment spans residues 309 to 331 (FLRVVRFVRILRIFKLTRHFVGL). Over 332–344 (RVLGHTLRASTNE) the chain is Cytoplasmic. The chain crosses the membrane as a helical span at residues 345-366 (FLLLIIFLALGVLIFATMIYYA). 4 residues coordinate K(+): Thr-400, Leu-401, Gly-402, and Tyr-403. A Selectivity filter motif is present at residues 400-405 (TLGYGD). The chain crosses the membrane as a helical span at residues 415–436 (LVGALCALAGVLTIAMPVPVIV). The Cytoplasmic portion of the chain corresponds to 437 to 511 (NNFGMYYSLA…GRKPLRGMSI (75 aa)). Ser-474 is modified (phosphoserine). Thr-483 carries the phosphothreonine modification.

It belongs to the potassium channel family. C (Shaw) (TC 1.A.1.2) subfamily. Kv3.1/KCNC1 sub-subfamily. Homotetramer. Homomultimer. Heteromultimer with KCNG3, KCNG4 and KCNV2. Heteromultimer with KCNC2. Heterotetramer with KCNC3. Interacts with the ancillary subunits KCNE1 and KCNE2; the interaction modulates channel activity. Post-translationally, N-glycosylated; contains sialylated glycans. In terms of tissue distribution, detected in cerebellum. Detected in brain (at protein level). Detected in brain.

It is found in the cell membrane. The protein localises to the cell projection. Its subcellular location is the axon. It localises to the presynaptic cell membrane. The catalysed reaction is K(+)(in) = K(+)(out). Voltage-gated potassium channel that opens in response to the voltage difference across the membrane and through which potassium ions pass in accordance with their electrochemical gradient. The mechanism is time-dependent and inactivation is slow. Plays an important role in the rapid repolarization of fast-firing brain neurons. Can form functional homotetrameric channels and heterotetrameric channels that contain variable proportions of KCNC2, and possibly other family members as well. Contributes to fire sustained trains of very brief action potentials at high frequency in pallidal neurons. This chain is Voltage-gated potassium channel KCNC1, found in Mus musculus (Mouse).